The primary structure comprises 124 residues: Small ribosomal subunit protein uS12 (124 aa).

The residue at position 89 (Asp89) is a 3-methylthioaspartic acid.

It belongs to the universal ribosomal protein uS12 family. Part of the 30S ribosomal subunit. Contacts proteins S8 and S17. May interact with IF1 in the 30S initiation complex.

In terms of biological role, with S4 and S5 plays an important role in translational accuracy. Functionally, interacts with and stabilizes bases of the 16S rRNA that are involved in tRNA selection in the A site and with the mRNA backbone. Located at the interface of the 30S and 50S subunits, it traverses the body of the 30S subunit contacting proteins on the other side and probably holding the rRNA structure together. The combined cluster of proteins S8, S12 and S17 appears to hold together the shoulder and platform of the 30S subunit. The chain is Small ribosomal subunit protein uS12 from Vibrio campbellii (strain ATCC BAA-1116).